The following is a 116-amino-acid chain: MRRINTIMQGKTNGGNGPESGTVVVTRTQPKTRKPSLYRVLLLNDDYTPMEFVVHVLQRFFQKNLDDATRIMLHVHNHGVGECGVFTYEVAETKVSQVMDFARQNQHPLQCVMEKK.

Polar residues predominate over residues 1–11 (MRRINTIMQGK). Positions 1 to 23 (MRRINTIMQGKTNGGNGPESGTV) are disordered.

It belongs to the ClpS family. As to quaternary structure, binds to the N-terminal domain of the chaperone ClpA.

Functionally, involved in the modulation of the specificity of the ClpAP-mediated ATP-dependent protein degradation. This Brucella abortus (strain S19) protein is ATP-dependent Clp protease adapter protein ClpS.